A 72-amino-acid chain; its full sequence is Antimicrobial peptide MeuNaTxbeta-4 (72 aa).

An N-terminal signal peptide occupies residues 1-5 (LIGVK). The LCN-type CS-alpha/beta domain maps to 7 to 69 (EHGYLLDKYT…LWHYETNKCN (63 aa)). Intrachain disulfides connect C18–C68, C22–C43, C29–C50, and C33–C52.

In terms of tissue distribution, expressed by the venom gland.

The protein resides in the secreted. In terms of biological role, antimicrobial peptide with weak activity against both Gram-positive and -negative bacteria. Its antibiotic activity is potentiated by other antibacterial peptides such as Meucin-49. In Mesobuthus eupeus (Lesser Asian scorpion), this protein is Antimicrobial peptide MeuNaTxbeta-4.